We begin with the raw amino-acid sequence, 158 residues long: Tryptophan-rich protein TspO (158 aa).

5 consecutive transmembrane segments (helical) span residues 5-25 (ILTL…GSTF), 48-68 (LFPP…AKVL), 79-99 (VGVV…ASFF), 105-125 (LAGL…MLAF), and 134-154 (LLLV…FTIL).

The protein belongs to the TspO/BZRP family.

The protein localises to the membrane. Its subcellular location is the cell membrane. Functionally, binds tetrapyrroles and promotes the photooxidative degradation of protoporphyrin IX. Can bind the benzodiazepine receptor agonist PK-11195 (in vitro); this interferes with photooxidative tetrapyrrole degradation. May play a role in the transmembrane transport of tetrapyrroles and similar compounds. The chain is Tryptophan-rich protein TspO from Chlorobaculum tepidum (strain ATCC 49652 / DSM 12025 / NBRC 103806 / TLS) (Chlorobium tepidum).